The chain runs to 515 residues: Glucose-6-phosphate 1-dehydrogenase (515 aa).

Position 2 is an N-acetylalanine (Ala2). Position 8 is a phosphoserine (Ser8). Thr10 carries the post-translational modification Phosphothreonine. NADP(+)-binding positions include 38-45 (GASGDLAK) and Arg72. Lys89 carries the N6-acetyllysine modification. Residues Tyr147 and Lys171 each contribute to the NADP(+) site. D-glucose 6-phosphate contacts are provided by residues Lys171, 201-205 (HYLGK), Glu239, and Asp258. N6-(2-hydroxyisobutyryl)lysine; alternate is present on Lys171. Lys171 bears the N6-acetyllysine; alternate mark. Residue His263 is the Proton acceptor of the active site. NADP(+) is bound at residue Arg357. D-glucose 6-phosphate is bound by residues Lys360 and Arg365. NADP(+) contacts are provided by Lys366, Arg370, and Arg393. D-glucose 6-phosphate is bound at residue Gln395. NADP(+) contacts are provided by residues 401 to 403 (YTK) and 421 to 423 (DLT). Lys403 carries the N6-acetyllysine modification. Lys432 is modified (N6-acetyllysine). Arg487 is an NADP(+) binding site. An N6-acetyllysine modification is found at Lys497. NADP(+) contacts are provided by Tyr503 and Trp509. A Phosphotyrosine modification is found at Tyr503.

Belongs to the glucose-6-phosphate dehydrogenase family. Homotetramer; dimer of dimers. Interacts with SIRT2; the interaction is enhanced by H(2)O(2) treatment. Forms a ternary complex with ALDOB and TP53; this interaction is direct. ALDOB stabilizes the complex inhibiting G6PD activity and keeping oxidative pentose phosphate metabolism in check. Post-translationally, acetylated by ELP3 at Lys-403; acetylation inhibits its homodimerization and enzyme activity. Deacetylated by SIRT2 at Lys-403; deacetylation stimulates its enzyme activity.

Its subcellular location is the cytoplasm. The protein localises to the cytosol. It is found in the membrane. It catalyses the reaction D-glucose 6-phosphate + NADP(+) = 6-phospho-D-glucono-1,5-lactone + NADPH + H(+). Its pathway is carbohydrate degradation; pentose phosphate pathway; D-ribulose 5-phosphate from D-glucose 6-phosphate (oxidative stage): step 1/3. Cytosolic glucose-6-phosphate dehydrogenase that catalyzes the first and rate-limiting step of the oxidative branch within the pentose phosphate pathway/shunt, an alternative route to glycolysis for the dissimilation of carbohydrates and a major source of reducing power and metabolic intermediates for fatty acid and nucleic acid biosynthetic processes. The protein is Glucose-6-phosphate 1-dehydrogenase (G6pdx) of Rattus norvegicus (Rat).